Reading from the N-terminus, the 706-residue chain is Phenylalanine--tRNA ligase beta subunit, chloroplastic (706 aa).

The B5 domain occupies 300–388 (KVLKPIVLNY…RLHGFNNFLT (89 aa)). Mg(2+) is bound by residues Asp366, Asp372, Glu375, and Glu376. One can recognise an FDX-ACB domain in the interval 612–705 (SVYPKIVKDL…LELKVQAILR (94 aa)).

It belongs to the phenylalanyl-tRNA synthetase beta subunit family. Type 1 subfamily. In terms of assembly, tetramer of two alpha and two beta subunits. The cofactor is Mg(2+).

Its subcellular location is the plastid. The protein resides in the chloroplast. It carries out the reaction tRNA(Phe) + L-phenylalanine + ATP = L-phenylalanyl-tRNA(Phe) + AMP + diphosphate + H(+). The protein is Phenylalanine--tRNA ligase beta subunit, chloroplastic of Phaeodactylum tricornutum (strain CCAP 1055/1).